We begin with the raw amino-acid sequence, 460 residues long: Bifunctional protein GlmU (460 aa).

The tract at residues Met1 to Arg232 is pyrophosphorylase. UDP-N-acetyl-alpha-D-glucosamine contacts are provided by residues Leu8–Gly11, Lys22, Gln73, Gly78–Thr79, Tyr100–Asp102, Gly137, Glu157, Asn172, and Asn230. Residue Asp102 participates in Mg(2+) binding. Residue Asn230 participates in Mg(2+) binding. Residues Val233–Ala253 form a linker region. The tract at residues Gly254–Lys460 is N-acetyltransferase. 2 residues coordinate UDP-N-acetyl-alpha-D-glucosamine: Arg336 and Lys354. His366 (proton acceptor) is an active-site residue. UDP-N-acetyl-alpha-D-glucosamine-binding residues include Tyr369 and Asn380. Residues Ala383, Asn389–Tyr390, Ser408, Ala426, and Arg443 each bind acetyl-CoA.

This sequence in the N-terminal section; belongs to the N-acetylglucosamine-1-phosphate uridyltransferase family. In the C-terminal section; belongs to the transferase hexapeptide repeat family. Homotrimer. Mg(2+) serves as cofactor.

The protein localises to the cytoplasm. It catalyses the reaction alpha-D-glucosamine 1-phosphate + acetyl-CoA = N-acetyl-alpha-D-glucosamine 1-phosphate + CoA + H(+). The enzyme catalyses N-acetyl-alpha-D-glucosamine 1-phosphate + UTP + H(+) = UDP-N-acetyl-alpha-D-glucosamine + diphosphate. It functions in the pathway nucleotide-sugar biosynthesis; UDP-N-acetyl-alpha-D-glucosamine biosynthesis; N-acetyl-alpha-D-glucosamine 1-phosphate from alpha-D-glucosamine 6-phosphate (route II): step 2/2. Its pathway is nucleotide-sugar biosynthesis; UDP-N-acetyl-alpha-D-glucosamine biosynthesis; UDP-N-acetyl-alpha-D-glucosamine from N-acetyl-alpha-D-glucosamine 1-phosphate: step 1/1. The protein operates within bacterial outer membrane biogenesis; LPS lipid A biosynthesis. Catalyzes the last two sequential reactions in the de novo biosynthetic pathway for UDP-N-acetylglucosamine (UDP-GlcNAc). The C-terminal domain catalyzes the transfer of acetyl group from acetyl coenzyme A to glucosamine-1-phosphate (GlcN-1-P) to produce N-acetylglucosamine-1-phosphate (GlcNAc-1-P), which is converted into UDP-GlcNAc by the transfer of uridine 5-monophosphate (from uridine 5-triphosphate), a reaction catalyzed by the N-terminal domain. The protein is Bifunctional protein GlmU of Shewanella baltica (strain OS223).